A 371-amino-acid polypeptide reads, in one-letter code: MDLSNSSPVITDPVAISQQLLGGLPSNLMQFSVMPGGYSSSGMNVGVSRLKIEEVLVNGLLDAMKSSSPRRRLNVAFGEDNSSEEEDPAYSAWMAKCPSALASFKQIVASAQGKKIAVFLDYDGTLSPIVDDPDKAVMSPVMRAAVRNVAKYFPTAIVSGRSRNKVFEFVKLKELYYAGSHGMDIMAPSANHEHSAEKSKQANLFQPAHDFLPMIDEVTKSLLQVVSGIEGATVENNKFCVSVHYRNVAEKDWKLVARLVNEVLEAFPRLKVTNGRMVLEVRPVIDWDKGKAVEFLLQSLGLNDSENVIPIYIGDDRTDEDAFKVLRQRNCGYGILVSQVPKETEAFYSLRDPSEVMEFLNFLVRWKKHSV.

The protein belongs to the trehalose phosphatase family. Requires a divalent metal cation as cofactor. Expressed in roots and shoots.

The catalysed reaction is alpha,alpha-trehalose 6-phosphate + H2O = alpha,alpha-trehalose + phosphate. Its pathway is glycan biosynthesis; trehalose biosynthesis. Removes the phosphate from trehalose 6-phosphate to produce free trehalose. Trehalose accumulation in plant improves abiotic stress tolerance. This chain is Probable trehalose-phosphate phosphatase 1 (TPP1), found in Oryza sativa subsp. japonica (Rice).